The primary structure comprises 296 residues: MMEDKIIHTPRFDEQRRMRRKKRQRLQLFIFLSIVAIVSLILIYMFTSISYVKKISVNDTSINSTKTIKEKSGIQSNMRIYSLDTKQIVSNIEYLDGVKSVTVRRHFPNTVSINVEEYDVLGVVKDGEHYHPALENGQILHKHNYAEPSEVPLINNFSSKALNQLVKVLRASDTAIINQISEINFIPKVEASHRVQFYMKNGLEVIGDMRTIDNKLNYFPAMASKLKKDSNGRILKPGIIDLEIGAVFIPYESKQAEERRIELEAAMEERSEKDKAELEKSVEKLKKELNQVKKNS.

The Cytoplasmic segment spans residues 1 to 25 (MMEDKIIHTPRFDEQRRMRRKKRQR). The chain crosses the membrane as a helical span at residues 26-46 (LQLFIFLSIVAIVSLILIYMF). Topologically, residues 47 to 296 (TSISYVKKIS…KELNQVKKNS (250 aa)) are extracellular. A POTRA domain is found at 50 to 118 (SYVKKISVND…NTVSINVEEY (69 aa)).

The protein belongs to the FtsQ/DivIB family. DivIB subfamily.

Its subcellular location is the cell membrane. Its function is as follows. Cell division protein that may be involved in stabilizing or promoting the assembly of the division complex. The sequence is that of Cell division protein DivIB from Macrococcus caseolyticus (strain JCSC5402) (Macrococcoides caseolyticum).